A 126-amino-acid chain; its full sequence is Fluoride-specific ion channel FluC 2 (126 aa).

Helical transmembrane passes span 11-31 (VLLI…ICEH), 36-56 (LGIL…MYDA), 69-89 (AFGT…VQSF), and 93-113 (FLPA…GVFF). Gly-76 and Thr-79 together coordinate Na(+).

Belongs to the fluoride channel Fluc/FEX (TC 1.A.43) family.

It localises to the cell membrane. It carries out the reaction fluoride(in) = fluoride(out). With respect to regulation, na(+) is not transported, but it plays an essential structural role and its presence is essential for fluoride channel function. Its function is as follows. Fluoride-specific ion channel. Important for reducing fluoride concentration in the cell, thus reducing its toxicity. This chain is Fluoride-specific ion channel FluC 2, found in Methanosarcina mazei (strain ATCC BAA-159 / DSM 3647 / Goe1 / Go1 / JCM 11833 / OCM 88) (Methanosarcina frisia).